The sequence spans 685 residues: Tyrosinase (685 aa).

Residue S2 is modified to N-acetylserine. The Cu cation site is built by H67, H97, H106, H278, H282, and H307. A cross-link (2'-(S-cysteinyl)-histidine (Cys-His)) is located at residues 95 to 97; that stretch reads CTH. The propeptide at 409-685 is could be involved in enzyme activation; it reads ANFVENVADR…PCGHGPEDHI (277 aa).

The protein belongs to the tyrosinase family. The cofactor is Cu(2+).

The enzyme catalyses 2 L-dopa + O2 = 2 L-dopaquinone + 2 H2O. It catalyses the reaction L-tyrosine + O2 = L-dopaquinone + H2O. Functionally, this is a copper-containing oxidase that functions in the formation of pigments such as melanins and other polyphenolic compounds. The protein is Tyrosinase (T) of Neurospora crassa (strain ATCC 24698 / 74-OR23-1A / CBS 708.71 / DSM 1257 / FGSC 987).